The chain runs to 233 residues: UPF0758 protein TTE0897 (233 aa).

An MPN domain is found at Ser108–Tyr230. Residues His179, His181, and Asp192 each coordinate Zn(2+). The JAMM motif motif lies at His179 to Asp192.

This sequence belongs to the UPF0758 family.

The chain is UPF0758 protein TTE0897 from Caldanaerobacter subterraneus subsp. tengcongensis (strain DSM 15242 / JCM 11007 / NBRC 100824 / MB4) (Thermoanaerobacter tengcongensis).